Consider the following 3122-residue polypeptide: DNA polymerase zeta catalytic subunit (3122 aa).

Disordered stretches follow at residues 270–289 (QRRR…SQDC), 425–457 (GYQG…NEPQ), 487–509 (LCRN…EMEW), 524–545 (LDGT…RAHS), and 842–886 (TSTK…TFEN). The span at 277–286 (ESSQISQPES) shows a compositional bias: polar residues. Residues 497–509 (EEDDSSSEEEMEW) are compositionally biased toward acidic residues. Polar residues-rich tracts occupy residues 533-545 (DNPL…RAHS) and 842-860 (TSTK…THND). Ser-1029 carries the post-translational modification Phosphoserine. 7 disordered regions span residues 1034 to 1075 (YPIY…TLSF), 1154 to 1285 (VYNT…PTGI), 1429 to 1453 (VSVS…ESQT), 1538 to 1616 (KAQS…LSDD), 1842 to 1869 (NDVL…SFTP), 1959 to 1979 (NPRP…ESSN), and 2091 to 2138 (AAVP…RHSS). Thr-1040 is subject to Phosphothreonine. Composition is skewed to basic residues over residues 1042 to 1063 (KKSH…KQHR) and 1166 to 1179 (KASR…KSKA). Residues 1215–1239 (RANEKSLSRKHAIPADEKMKPHSEA) show a composition bias toward basic and acidic residues. Residues 1243–1270 (PNHQSVSELTSSSGAQALSKQKEMSQTG) are compositionally biased toward polar residues. Positions 1429–1440 (VSVSEQSKTSET) are enriched in low complexity. Polar residues-rich tracts occupy residues 1441-1453 (CSPG…ESQT) and 1538-1561 (KAQS…ISVS). The span at 1566 to 1587 (KANKRTRPVTSPRKPRTPRRTK) shows a compositional bias: basic residues. Residues 1588–1598 (PKEQTPRRLKV) are compositionally biased toward basic and acidic residues. The span at 1602–1615 (NLQTSGHLDNSLSD) shows a compositional bias: polar residues. The interval 1844-1895 (VLTPTPDSSPRSTSSPLQSKNGSFTPRTAHILKPLMSPPSREEIVATLLDHD) is mediates interaction with MAD2L2. Residues 1846 to 1859 (TPTPDSSPRSTSSP) show a composition bias toward low complexity. Polar residues predominate over residues 1860-1869 (LQSKNGSFTP). Residue Ser-1964 is modified to Phosphoserine. 4 residues coordinate Zn(2+): Cys-3034, Cys-3037, Cys-3046, and Cys-3049. The segment at 3034–3049 (CPVCDDLTQHGICSKC) adopts a CysA-type zinc-finger fold. [4Fe-4S] cluster-binding residues include Cys-3078, Cys-3081, Cys-3091, and Cys-3096. The CysB motif motif lies at 3078 to 3096 (CRNCTGSFDRHIPCVSLNC).

The protein belongs to the DNA polymerase type-B family. As to quaternary structure, heterodimer with MAD2L2. This dimer forms the minimal DNA polymerase zeta complex (Pol-zeta2), with REV3L bearing DNA polymerase catalytic activity, although its activity is very low in this context. Component of the tetrameric Pol-zeta complex (Pol-zeta4), which consists of REV3L, MAD2L2, POLD2 and POLD3; Pol-zeta4 is the fully active form of DNA polymerase zeta. [4Fe-4S] cluster is required as a cofactor.

The protein localises to the nucleus. It carries out the reaction DNA(n) + a 2'-deoxyribonucleoside 5'-triphosphate = DNA(n+1) + diphosphate. In terms of biological role, catalytic subunit of the DNA polymerase zeta complex, an error-prone polymerase specialized in translesion DNA synthesis (TLS). Lacks an intrinsic 3'-5' exonuclease activity and thus has no proofreading function. This chain is DNA polymerase zeta catalytic subunit (Rev3l), found in Mus musculus (Mouse).